Consider the following 79-residue polypeptide: Sec-independent protein translocase protein TatA (79 aa).

The helical transmembrane segment at 1-21 threads the bilayer; sequence MGSLSIWHWIVVIAVVLLLFG. Over residues 43–60 the composition is skewed to basic and acidic residues; the sequence is LQDDEKTAEKPDPVKSID. The interval 43-79 is disordered; that stretch reads LQDDEKTAEKPDPVKSIDHNAPTAAAPTRTDVGSKAV.

The protein belongs to the TatA/E family. In terms of assembly, the Tat system comprises two distinct complexes: a TatABC complex, containing multiple copies of TatA, TatB and TatC subunits, and a separate TatA complex, containing only TatA subunits. Substrates initially bind to the TatABC complex, which probably triggers association of the separate TatA complex to form the active translocon.

The protein resides in the cell inner membrane. In terms of biological role, part of the twin-arginine translocation (Tat) system that transports large folded proteins containing a characteristic twin-arginine motif in their signal peptide across membranes. TatA could form the protein-conducting channel of the Tat system. The chain is Sec-independent protein translocase protein TatA from Rhodopseudomonas palustris (strain BisB5).